The primary structure comprises 151 residues: Large ribosomal subunit protein bL17 (151 aa).

Residues 118–151 (EAKQPPRKEKAKKPAPVQAEEASATPASEEKAQD) are disordered. Residues 131–144 (PAPVQAEEASATPA) show a composition bias toward low complexity.

Belongs to the bacterial ribosomal protein bL17 family. In terms of assembly, part of the 50S ribosomal subunit. Contacts protein L32.

The polypeptide is Large ribosomal subunit protein bL17 (Syntrophobacter fumaroxidans (strain DSM 10017 / MPOB)).